The primary structure comprises 545 residues: Chaperonin GroEL (545 aa).

ATP-binding positions include 30 to 33 (TLGP), K51, 87 to 91 (DGTTT), G415, 479 to 481 (NAA), and D495.

It belongs to the chaperonin (HSP60) family. As to quaternary structure, forms a cylinder of 14 subunits composed of two heptameric rings stacked back-to-back. Interacts with the co-chaperonin GroES.

The protein resides in the cytoplasm. The enzyme catalyses ATP + H2O + a folded polypeptide = ADP + phosphate + an unfolded polypeptide.. Together with its co-chaperonin GroES, plays an essential role in assisting protein folding. The GroEL-GroES system forms a nano-cage that allows encapsulation of the non-native substrate proteins and provides a physical environment optimized to promote and accelerate protein folding. The sequence is that of Chaperonin GroEL from Tolumonas auensis (strain DSM 9187 / NBRC 110442 / TA 4).